Here is a 168-residue protein sequence, read N- to C-terminus: Photosystem I assembly protein Ycf3 (168 aa).

TPR repeat units lie at residues 35–68, 72–105, and 120–153; these read AFTY…EIDP, SYIL…NPFL, and GEQA…TPGN.

The protein belongs to the Ycf3 family.

Its subcellular location is the plastid. The protein resides in the chloroplast thylakoid membrane. Functionally, essential for the assembly of the photosystem I (PSI) complex. May act as a chaperone-like factor to guide the assembly of the PSI subunits. The chain is Photosystem I assembly protein Ycf3 from Ipomoea purpurea (Common morning glory).